A 360-amino-acid polypeptide reads, in one-letter code: uncharacterized protein (360 aa).

Residues glutamate 22–glutamate 32 show a composition bias toward acidic residues. A disordered region spans residues glutamate 22 to glycine 55. Positions valine 37–arginine 50 are enriched in basic residues.

This is an uncharacterized protein from Caenorhabditis elegans.